The primary structure comprises 237 residues: Thrombin-like enzyme agkihpin-1 (237 aa).

A propeptide is located at residue M1. The 227-residue stretch at I2–A228 folds into the Peptidase S1 domain. An intrachain disulfide couples C27 to C43. The Charge relay system role is filled by H42. Residue N80 is glycosylated (N-linked (GlcNAc...) asparagine). D87 functions as the Charge relay system in the catalytic mechanism. Intrachain disulfides connect C119-C189, C151-C168, and C179-C204. Residue S183 is the Charge relay system of the active site.

The protein belongs to the peptidase S1 family. Snake venom subfamily. In terms of tissue distribution, expressed by the venom gland.

It localises to the secreted. Its activity is regulated as follows. The hydrolysis of TAMe (tosyl-arginine methyl ester) substrate is activated by Ca(2+), Fe(3+), Mg(2+) and Zn(2+), and inhibited by EDTA, PMSF and DTT. In terms of biological role, thrombin-like enzyme that shows fibrinogenolytic activity against bovine fibrinogen alpha and beta chains, but not gamma chain. Hydrolyzes fibrin. Enhances ADP-induced human platelet aggregation. Has arginine esterase activity for TAMe (tosyl-arginine methyl ester) substrate. Reduces thrombin-induced thrombosis. Does not have hemorrhagic activity. Reduces the motility of human liver cancer HepG2 cells in a wound-healing assay. This Gloydius halys (Chinese water mocassin) protein is Thrombin-like enzyme agkihpin-1.